The chain runs to 302 residues: 1D-myo-inositol 2-acetamido-2-deoxy-alpha-D-glucopyranoside deacetylase (302 aa).

Residues His12, Asp15, and His147 each contribute to the Zn(2+) site.

It belongs to the MshB deacetylase family. The cofactor is Zn(2+).

It carries out the reaction 1D-myo-inositol 2-acetamido-2-deoxy-alpha-D-glucopyranoside + H2O = 1D-myo-inositol 2-amino-2-deoxy-alpha-D-glucopyranoside + acetate. Functionally, catalyzes the deacetylation of 1D-myo-inositol 2-acetamido-2-deoxy-alpha-D-glucopyranoside (GlcNAc-Ins) in the mycothiol biosynthesis pathway. This chain is 1D-myo-inositol 2-acetamido-2-deoxy-alpha-D-glucopyranoside deacetylase, found in Thermobispora bispora (strain ATCC 19993 / DSM 43833 / CBS 139.67 / JCM 10125 / KCTC 9307 / NBRC 14880 / R51).